The following is a 181-amino-acid chain: Large ribosomal subunit protein uL5 (181 aa).

The protein belongs to the universal ribosomal protein uL5 family. As to quaternary structure, part of the 50S ribosomal subunit; part of the 5S rRNA/L5/L18/L25 subcomplex. Contacts the 5S rRNA and the P site tRNA. Forms a bridge to the 30S subunit in the 70S ribosome.

This is one of the proteins that bind and probably mediate the attachment of the 5S RNA into the large ribosomal subunit, where it forms part of the central protuberance. In the 70S ribosome it contacts protein S13 of the 30S subunit (bridge B1b), connecting the 2 subunits; this bridge is implicated in subunit movement. Contacts the P site tRNA; the 5S rRNA and some of its associated proteins might help stabilize positioning of ribosome-bound tRNAs. The chain is Large ribosomal subunit protein uL5 from Desulforamulus reducens (strain ATCC BAA-1160 / DSM 100696 / MI-1) (Desulfotomaculum reducens).